Here is a 513-residue protein sequence, read N- to C-terminus: ATP synthase subunit alpha (513 aa).

Residue 169–176 participates in ATP binding; the sequence is GDRQTGKT.

The protein belongs to the ATPase alpha/beta chains family. F-type ATPases have 2 components, CF(1) - the catalytic core - and CF(0) - the membrane proton channel. CF(1) has five subunits: alpha(3), beta(3), gamma(1), delta(1), epsilon(1). CF(0) has three main subunits: a(1), b(2) and c(9-12). The alpha and beta chains form an alternating ring which encloses part of the gamma chain. CF(1) is attached to CF(0) by a central stalk formed by the gamma and epsilon chains, while a peripheral stalk is formed by the delta and b chains.

It is found in the cell inner membrane. The enzyme catalyses ATP + H2O + 4 H(+)(in) = ADP + phosphate + 5 H(+)(out). In terms of biological role, produces ATP from ADP in the presence of a proton gradient across the membrane. The alpha chain is a regulatory subunit. In Shigella boydii serotype 18 (strain CDC 3083-94 / BS512), this protein is ATP synthase subunit alpha.